A 156-amino-acid polypeptide reads, in one-letter code: Acyl carrier protein, mitochondrial (156 aa).

Residues 1 to 68 (MASRVLCACV…GTVTHLCRQY (68 aa)) constitute a mitochondrion transit peptide. Positions 77-152 (DGIKDRVLYV…EIVDYIADKK (76 aa)) constitute a Carrier domain. Lys-88 carries the post-translational modification N6-acetyllysine. Ser-112 carries the O-(pantetheine 4'-phosphoryl)serine modification.

It belongs to the acyl carrier protein (ACP) family. In terms of assembly, mammalian complex I is composed of 45 different subunits. Interacts with ETFRF1. Identified in a complex composed of MALSU1, MIEF1 upstream open reading frame protein and NDUFAB1; within the trimeric complex, MIEF1 upstream open reading frame protein functions as a bridging scaffold that interacts with MALSU1 on one side, and with NDUFAB1 on the other side. The complex interacts with the mitochondrial large ribosomal subunit. Interacts with alpha-1-microglobulin chain; this interaction is required for the maintenance of mitochondrial redox homeostasis. Component of the mitochondrial core iron-sulfur cluster (ISC) complex composed of NFS1, LYRM4, NDUFAB1, ISCU, FXN, and FDX2; this complex is a heterohexamer containing two copies of each monomer. Component of the cyteine desulfurase complex composed of NFS1, LYRM4 and NDUFAB1; this complex contributes to the stability and cysteine desulfurase activity of NFS1. Post-translationally, phosphopantetheinylation at Ser-112 is essential for interactions with LYR motif-containing proteins.

It is found in the mitochondrion. Carrier of the growing fatty acid chain in fatty acid biosynthesis. Accessory and non-catalytic subunit of the mitochondrial membrane respiratory chain NADH dehydrogenase (Complex I), which functions in the transfer of electrons from NADH to the respiratory chain. Accessory protein, of the core iron-sulfur cluster (ISC) assembly complex, that regulates, in association with LYRM4, the stability and the cysteine desulfurase activity of NFS1 and participates in the [2Fe-2S] clusters assembly on the scaffolding protein ISCU. The core iron-sulfur cluster (ISC) assembly complex is involved in the de novo synthesis of a [2Fe-2S] cluster, the first step of the mitochondrial iron-sulfur protein biogenesis. This process is initiated by the cysteine desulfurase complex (NFS1:LYRM4:NDUFAB1) that produces persulfide which is delivered on the scaffold protein ISCU in a FXN-dependent manner. Then this complex is stabilized by FDX2 which provides reducing equivalents to accomplish the [2Fe-2S] cluster assembly. Finally, the [2Fe-2S] cluster is transferred from ISCU to chaperone proteins, including HSCB, HSPA9 and GLRX5. This Mus musculus (Mouse) protein is Acyl carrier protein, mitochondrial.